Reading from the N-terminus, the 704-residue chain is MSEQKAFSLKIDEQNIAWLAIDVPNEKMNTLQAAFADEMKEIFAQLKDTSGVKGMVIHSLKPDNFVAGADVRMLEACTTASEAEALAKQGQELFQQLSDLPYPVVAAIHGPCLGGGLELALACDYRVCTDSDKTRLGLPEVQLGLLPGSGGTQRLPRLIGLLPSLDLILTGKQLRAKKAKKLGVVDACVPETVLLDIAKMHVEKGKKKGKQKQSTKEKLMSGSGLGRKFVFEQAAKKTNEKTRGNYPATVAILEVIQHGLEKGFAQGQELEAKRFGELVMSSESKALRSIFFATTEMKKENGAEAEPTAVNKVGVLGGGLMGAGISHVSVAKAKVPVRIKDVSNDGVLNALNYNYKLFEKQRKRRIISKAGLQSKMLQLSGGIDFTSFNHIDVVIEAVFEDLDLKQAMVADIEANAKPETIFATNTSSLPIHKIAEKAERPENIVGLHYFSPVEKMPLVEVIPHETTSEETISTVVALAKKQGKTPIVVKDKAGFYVNRILAPYMNEAAHILLANEPIEQLDGALLDFGFPVGPITLLDEVGVDIGAKIMPILVNELGERFKGPDVFDTLLNDGRKGRKTGKGFYTYKGKKKEVDKSVYKLLNLTPESKLSDNDIALRCVLPMLNEAVRCLDDGIIRSPRDGDIGAIFGIGFPPFLGGPFCYMDQFGLKELVEKMNEFASKYGDRYAPCDGLLTRAGEGRNFYD.

The tract at residues 1-190 (MSEQKAFSLK…KLGVVDACVP (190 aa)) is enoyl-CoA hydratase. Positions 308 to 704 (TAVNKVGVLG…RAGEGRNFYD (397 aa)) are 3-hydroxyacyl-CoA dehydrogenase.

In the N-terminal section; belongs to the enoyl-CoA hydratase/isomerase family. The protein in the central section; belongs to the 3-hydroxyacyl-CoA dehydrogenase family. In terms of assembly, heterotetramer of two alpha chains (FadJ) and two beta chains (FadI).

Its subcellular location is the cytoplasm. The enzyme catalyses a (3S)-3-hydroxyacyl-CoA = a (2E)-enoyl-CoA + H2O. It catalyses the reaction a 4-saturated-(3S)-3-hydroxyacyl-CoA = a (3E)-enoyl-CoA + H2O. The catalysed reaction is a (3S)-3-hydroxyacyl-CoA + NAD(+) = a 3-oxoacyl-CoA + NADH + H(+). It carries out the reaction (3S)-3-hydroxybutanoyl-CoA = (3R)-3-hydroxybutanoyl-CoA. Its pathway is lipid metabolism; fatty acid beta-oxidation. Functionally, catalyzes the formation of a hydroxyacyl-CoA by addition of water on enoyl-CoA. Also exhibits 3-hydroxyacyl-CoA epimerase and 3-hydroxyacyl-CoA dehydrogenase activities. The chain is Fatty acid oxidation complex subunit alpha from Vibrio campbellii (strain ATCC BAA-1116).